The primary structure comprises 299 residues: Protoheme IX farnesyltransferase (299 aa).

9 helical membrane-spanning segments follow: residues 25 to 45 (VVLL…RAGV), 47 to 67 (WTVL…AAAV), 95 to 115 (AAAL…LLTF), 119 to 139 (LAAW…TGFL), 147 to 167 (IVIG…AVTG), 173 to 193 (PLLL…ALAI), 218 to 238 (VHIL…FAIH), 243 to 263 (LYLA…IALY), and 277 to 297 (FSIW…YLLL).

Belongs to the UbiA prenyltransferase family. Protoheme IX farnesyltransferase subfamily.

It is found in the cell inner membrane. The catalysed reaction is heme b + (2E,6E)-farnesyl diphosphate + H2O = Fe(II)-heme o + diphosphate. It participates in porphyrin-containing compound metabolism; heme O biosynthesis; heme O from protoheme: step 1/1. Functionally, converts heme B (protoheme IX) to heme O by substitution of the vinyl group on carbon 2 of heme B porphyrin ring with a hydroxyethyl farnesyl side group. In Stutzerimonas stutzeri (strain A1501) (Pseudomonas stutzeri), this protein is Protoheme IX farnesyltransferase.